The chain runs to 252 residues: Geranylgeranylglyceryl phosphate synthase (252 aa).

Mg(2+) is bound by residues aspartate 27 and serine 56. Residues 175–181 (YLEAGSG), 206–207 (GG), and 228–229 (GT) each bind sn-glycerol 1-phosphate.

The protein belongs to the GGGP/HepGP synthase family. Group II subfamily. Mg(2+) is required as a cofactor.

Its subcellular location is the cytoplasm. The catalysed reaction is sn-glycerol 1-phosphate + (2E,6E,10E)-geranylgeranyl diphosphate = sn-3-O-(geranylgeranyl)glycerol 1-phosphate + diphosphate. Its pathway is membrane lipid metabolism; glycerophospholipid metabolism. Prenyltransferase that catalyzes the transfer of the geranylgeranyl moiety of geranylgeranyl diphosphate (GGPP) to the C3 hydroxyl of sn-glycerol-1-phosphate (G1P). This reaction is the first ether-bond-formation step in the biosynthesis of archaeal membrane lipids. The protein is Geranylgeranylglyceryl phosphate synthase of Pyrococcus abyssi (strain GE5 / Orsay).